A 413-amino-acid chain; its full sequence is uncharacterized protein (413 aa).

Positions 3–155 (MEPRVLRREE…SRVRLSVPAG (153 aa)) constitute an N-acetyltransferase domain. Residues 86–88 (VSV), 94–99 (RRGVLT), and 122–123 (SE) contribute to the acetyl-CoA site. Catalysis depends on Y127, which acts as the Proton donor. F413 (proton acceptor; via carboxylate) is an active-site residue.

The protein belongs to the acetyltransferase Eis family. As to quaternary structure, homohexamer; trimer of dimers.

This is an uncharacterized protein from Streptomyces coelicolor (strain ATCC BAA-471 / A3(2) / M145).